A 108-amino-acid chain; its full sequence is uncharacterized protein (108 aa).

Composition is skewed to basic and acidic residues over residues 1–15 and 53–69; these read MSEAKDNGSRDEVLV and KLKDRESHQENEDRNSE. Residues 1–77 form a disordered region; sequence MSEAKDNGSR…SELDQDEEDK (77 aa).

This is an uncharacterized protein from Homo sapiens (Human).